The chain runs to 683 residues: MDDYKYQDNYGGYAPSDGYYRGNESNPEEDAQSDVTEGHDEEDEIYEGEYQGIPHPDDVKAKQAKMAPSRMDSLRGQTDLMAERLEDEEQLAHQYETIMDECGHGRFQWILFFVLGLALMADGVEVFVVSFALPSAEKDMCLSSSKKGMLGMIVYLGMMAGAFILGGLADKLGRKRVLSMSLAVNASFASLSSFVQGYGAFLFCRLISGIGIGGALPIVFAYFSEFLSREKRGEHLSWLGIFWMTGGLYASAMAWSIIPHYGWGFSMGTNYHFHSWRVFVIVCALPCTVSMVALKFMPESPRFLLEMGKHDEAWMILKQVHDTNMRAKGTPEKVFTVSNIKTPKQMDEFIEIQSSTGTWYQRWLVRFKTIFKQVWDNALYCVMGPYRMNTLILAVVWFAMAFSYYGLTVWFPDMIRYFQDEEYKSKMKVFFGEHVYGATINFTMENQIHQHGKLVNDKFTRMYFKHVLFEDTFFDECYFEDVTSTDTYFKNCTIESTIFYNTDLYEHKFINCRFINSTFLEQKEGCHMDLEQDNDFLIYLVSFLGSLSVLPGNIISALLMDRIGRLKMIGGSMLISAVCCFFLFFGNSESAMIGWQCLFCGTSIAAWNALDVITVELYPTNQRATAFGILNGLCKFGAILGNTIFASFVGITKVVPILLAAASLVGGGLIALRLPETREQVLM.

A disordered region spans residues 1–42 (MDDYKYQDNYGGYAPSDGYYRGNESNPEEDAQSDVTEGHDEE). Topologically, residues 1–108 (MDDYKYQDNY…MDECGHGRFQ (108 aa)) are cytoplasmic. Serine 33 carries the post-translational modification Phosphoserine. A Phosphothreonine modification is found at threonine 36. A helical transmembrane segment spans residues 109-129 (WILFFVLGLALMADGVEVFVV). The Extracellular segment spans residues 130 to 148 (SFALPSAEKDMCLSSSKKG). A helical transmembrane segment spans residues 149–169 (MLGMIVYLGMMAGAFILGGLA). The Cytoplasmic segment spans residues 170-182 (DKLGRKRVLSMSL). Residues 183-203 (AVNASFASLSSFVQGYGAFLF) form a helical membrane-spanning segment. At 204-205 (CR) the chain is on the extracellular side. The chain crosses the membrane as a helical span at residues 206–226 (LISGIGIGGALPIVFAYFSEF). Residues 227 to 237 (LSREKRGEHLS) lie on the Cytoplasmic side of the membrane. The chain crosses the membrane as a helical span at residues 238 to 258 (WLGIFWMTGGLYASAMAWSII). The Extracellular portion of the chain corresponds to 259–277 (PHYGWGFSMGTNYHFHSWR). The chain crosses the membrane as a helical span at residues 278–298 (VFVIVCALPCTVSMVALKFMP). Over 299 to 390 (ESPRFLLEMG…CVMGPYRMNT (92 aa)) the chain is Cytoplasmic. Residues 391–411 (LILAVVWFAMAFSYYGLTVWF) traverse the membrane as a helical segment. Residues 412-535 (PDMIRYFQDE…CHMDLEQDND (124 aa)) are Extracellular-facing. The residue at position 423 (tyrosine 423) is a Phosphotyrosine. N-linked (GlcNAc...) asparagine glycosylation is found at asparagine 441, asparagine 491, and asparagine 516. Residues 536-556 (FLIYLVSFLGSLSVLPGNIIS) traverse the membrane as a helical segment. Over 557 to 565 (ALLMDRIGR) the chain is Cytoplasmic. The helical transmembrane segment at 566-586 (LKMIGGSMLISAVCCFFLFFG) threads the bilayer. Topologically, residues 587–592 (NSESAM) are extracellular. Residues 593-613 (IGWQCLFCGTSIAAWNALDVI) form a helical membrane-spanning segment. The Cytoplasmic portion of the chain corresponds to 614–626 (TVELYPTNQRATA). The chain crosses the membrane as a helical span at residues 627 to 649 (FGILNGLCKFGAILGNTIFASFV). Topologically, residues 650–653 (GITK) are extracellular. A helical membrane pass occupies residues 654-672 (VVPILLAAASLVGGGLIAL). Over 673–683 (RLPETREQVLM) the chain is Cytoplasmic.

It belongs to the major facilitator superfamily. Interacts with SYT1 in a calcium-independent manner. Forms a complex with SYT1, syntaxin-1 and SNAP25. As to quaternary structure, (Microbial infection) Interacts with C.botulinum neurotoxin type A2 (BoNT/A, botA). Interaction is improved by glycosylation of SV2. N-glycosylated. In terms of processing, the N-terminal cytoplasmic domain is phosphorylated by CK1.

It is found in the cytoplasmic vesicle. Its subcellular location is the secretory vesicle. The protein resides in the synaptic vesicle membrane. It localises to the acrosome. Functionally, probably plays a role in the control of regulated secretion in neural and endocrine cells. Its function is as follows. (Microbial infection) Receptor for the C.botulinum neurotoxin type A2 (BoNT/A, botA); glycosylation is not essential but enhances the interaction. Probably also serves as a receptor for the closely related C.botulinum neurotoxin type A1. The sequence is that of Synaptic vesicle glycoprotein 2B (SV2B) from Homo sapiens (Human).